A 315-amino-acid chain; its full sequence is G-box-binding factor 1 (315 aa).

Disordered regions lie at residues 1–56 and 93–268; these read MGTS…GSPS and MPMP…RDEL. The segment covering 46 to 56 has biased composition (pro residues); sequence PFFPSPVGSPS. Polar residues-rich tracts occupy residues 133–164 and 178–187; these read GSGN…QEQG and ASSQSTTGEI. One can recognise a bZIP domain in the interval 222 to 285; that stretch reads ELKRQKRKQS…DKLKSENNSI (64 aa). Residues 224 to 243 form a basic motif region; that stretch reads KRQKRKQSNRESARRSRLRK. The span at 249–262 shows a compositional bias: polar residues; that stretch reads QLQQRVESLSNENQ. Residues 250–285 are leucine-zipper; sequence LQQRVESLSNENQSLRDELQRLSSECDKLKSENNSI.

It belongs to the bZIP family. Monomer and heterodimers with BZIP16 and BZIP68. Interacts with GIP1. Phosphorylated by CK2. As to expression, found in both light and dark grown leaves.

It is found in the nucleus. Its function is as follows. Binds to the G-box motif (5'-CCACGTGG-3') of the rbcS-1A gene promoter. G-box and G-box-like motifs are cis-acting elements defined in promoters of certain plant genes which are regulated by such diverse stimuli as light-induction or hormone control. Binds to the G-box motif 5'-CACGTG-3' of LHCB2.4 (At3g27690) promoter. May act as transcriptional activator in light-regulated expression of LHCB2.4. Probably binds DNA as monomer. DNA-binding activity is redox-dependent. This Arabidopsis thaliana (Mouse-ear cress) protein is G-box-binding factor 1 (GBF1).